The primary structure comprises 97 residues: Aspartyl/glutamyl-tRNA(Asn/Gln) amidotransferase subunit C (97 aa).

The protein belongs to the GatC family. In terms of assembly, heterotrimer of A, B and C subunits.

It carries out the reaction L-glutamyl-tRNA(Gln) + L-glutamine + ATP + H2O = L-glutaminyl-tRNA(Gln) + L-glutamate + ADP + phosphate + H(+). It catalyses the reaction L-aspartyl-tRNA(Asn) + L-glutamine + ATP + H2O = L-asparaginyl-tRNA(Asn) + L-glutamate + ADP + phosphate + 2 H(+). In terms of biological role, allows the formation of correctly charged Asn-tRNA(Asn) or Gln-tRNA(Gln) through the transamidation of misacylated Asp-tRNA(Asn) or Glu-tRNA(Gln) in organisms which lack either or both of asparaginyl-tRNA or glutaminyl-tRNA synthetases. The reaction takes place in the presence of glutamine and ATP through an activated phospho-Asp-tRNA(Asn) or phospho-Glu-tRNA(Gln). The polypeptide is Aspartyl/glutamyl-tRNA(Asn/Gln) amidotransferase subunit C (Parasynechococcus marenigrum (strain WH8102)).